A 40-amino-acid polypeptide reads, in one-letter code: Fibrinolytic protease (40 aa).

The Peptidase S1 domain occupies 1–40 (IVGGNEVTPHAYPWQVGLFIDDMYFCGGSISVTLTGWGKP).

The protein belongs to the peptidase S1 family.

It localises to the secreted. It is found in the extracellular space. In terms of biological role, serine protease with fibrinolytic activity. In Euphausia superba (Antarctic krill), this protein is Fibrinolytic protease.